The sequence spans 166 residues: Ribosome maturation factor RimP (166 aa).

It belongs to the RimP family.

Its subcellular location is the cytoplasm. Its function is as follows. Required for maturation of 30S ribosomal subunits. This is Ribosome maturation factor RimP from Psychrobacter arcticus (strain DSM 17307 / VKM B-2377 / 273-4).